A 236-amino-acid chain; its full sequence is Small ribosomal subunit protein eS6 (236 aa).

S232 and S233 each carry phosphoserine.

It belongs to the eukaryotic ribosomal protein eS6 family. Post-translationally, phosphorylated.

The polypeptide is Small ribosomal subunit protein eS6 (RPS6) (Eremothecium gossypii (strain ATCC 10895 / CBS 109.51 / FGSC 9923 / NRRL Y-1056) (Yeast)).